An 834-amino-acid chain; its full sequence is Sodium/hydrogen exchanger 3 (834 aa).

An N-terminal signal peptide occupies residues 1 to 25 (MWGLGARGPDRGLLLALALGGLARA). Residues 26-51 (GGVEVEPGGAHGESGGFQVVTFEWAH) are Extracellular-facing. Residues 52–74 (VQDPYVIALWILVASLAKIGFHL) form a helical membrane-spanning segment. Residues 75–82 (SHKVTSVV) are Cytoplasmic-facing. The chain crosses the membrane as a helical span at residues 83–102 (PESALLIVLGLVLGGIVWAA). Over 103-111 (DHIASFTLT) the chain is Extracellular. A helical membrane pass occupies residues 112–129 (PTVFFFYLLPPIVLDAGY). Topologically, residues 130-132 (FMP) are cytoplasmic. A helical transmembrane segment spans residues 133 to 168 (NRLFFGNLGTILLYAVVGTVWNAATTGLSLYGVFLS). The a 1,2-diacyl-sn-glycero-3-phospho-(1D-myo-inositol) site is built by glycine 138, glycine 141, and threonine 142. Residues 169–181 (GLMGDLQIGLLDF) lie on the Extracellular side of the membrane. Residues 182–203 (LLFGSLMAAVDPVAVLAVFEEV) form a helical membrane-spanning segment. At 204-205 (HV) the chain is on the cytoplasmic side. A helical transmembrane segment spans residues 206 to 237 (NEVLFIIVFGESLLNDAVTVVLYNVFESFVAL). Residues 238 to 244 (GGDNVTG) are Extracellular-facing. The N-linked (GlcNAc...) asparagine glycan is linked to asparagine 241. A helical membrane pass occupies residues 245-279 (VDCVKGIVSFFVVSLGGTLVGVVFAFLLSLVTRFT). Residues 280–281 (KH) lie on the Cytoplasmic side of the membrane. A helical membrane pass occupies residues 282–304 (VRIIEPGFVFIISYLSYLTSEML). Over 305–306 (SL) the chain is Extracellular. A helical membrane pass occupies residues 307-323 (SAILAITFCGICCQKYV). The Cytoplasmic segment spans residues 324–330 (KANISEQ). Residues 331–359 (SATTVRYTMKMLASSAETIIFMFLGISAV) traverse the membrane as a helical segment. Over 360–367 (NPFIWTWN) the chain is Extracellular. Residues 368-389 (TAFVLLTLVFISVYRAIGVVLQ) form a helical membrane-spanning segment. The Cytoplasmic portion of the chain corresponds to 390–402 (TWLLNRYRMVQLE). Methionine 398 serves as a coordination point for a 1,2-diacyl-sn-glycero-3-phospho-(1D-myo-inositol). A helical transmembrane segment spans residues 403-426 (PIDQVVLSYGGLRGAVAFALVVLL). The Extracellular portion of the chain corresponds to 427-433 (DGDKVKE). Residues 434-467 (KNLFVSTTIIVVFFTVIFQGLTIKPLVQWLKVKR) form a helical membrane-spanning segment. At 468–834 (SEHREPRLNE…PAALPESTHM (367 aa)) the chain is on the cytoplasmic side. A 1,2-diacyl-sn-glycero-3-phospho-(1D-myo-inositol) contacts are provided by glutamine 497, isoleucine 498, and histidine 500. Serine 555 and serine 563 each carry phosphoserine. Residues 575–589 (RSSTVEASVSYLLRE) form an interaction with EZR region. Residues 590–667 (NVSAVCLDMQ…RKRLESFKST (78 aa)) are interaction with NHERF4. An interaction with AHCYL1 region spans residues 591 to 695 (VSAVCLDMQS…AQKRRNSSIP (105 aa)). Serine 592 and serine 607 each carry phosphoserine. Residue serine 663 is modified to Phosphoserine; by SGK1. The span at 679-691 (KLYKRERAQKRRN) shows a compositional bias: basic residues. A disordered region spans residues 679–728 (KLYKRERAQKRRNSSIPNGKLPMESPAQNFTIKEKDLELSDTEEPPNYDE). Acidic residues predominate over residues 717–728 (LSDTEEPPNYDE). Phosphoserine is present on residues serine 718, serine 810, and serine 813. The disordered stretch occupies residues 814-834 (FLQADGPEERPPAALPESTHM).

It belongs to the monovalent cation:proton antiporter 1 (CPA1) transporter (TC 2.A.36) family. Homodimer. Found in the forms of complex and dynamic macromolecular complexes. Binds NHERF1 and NHERF2. Interacts with CHP1; increases SLC9A3 trafficking and activity at the plasma membrane. Interacts with CHP2 and SHANK2. Interacts with PDZK1 (via C-terminal PDZ domain). Interacts with NHERF4 and interaction decrease in response to elevated calcium ion levels. Interacts with AHCYL1; the interaction is required for SLC9A3 activity. Interacts with SNX27 (via PDZ domains); directs SLC9A3 membrane insertion from early endosomes to the plasma membrane. Interacts with EZR; interaction targets SLC9A3 to the apical membrane. In terms of processing, phosphorylated by PKA, which inhibits activity. Phosphorylation at Ser-663 by SGK1 is associated with increased abundance at the cell membrane. Phosphorylation at Ser-718 by CSNK2A1 regulates SLC9A3 activity through the formation of multiple signaling complexes.

Its subcellular location is the apical cell membrane. The protein resides in the cell membrane. It localises to the recycling endosome membrane. It is found in the early endosome membrane. It catalyses the reaction Na(+)(in) + H(+)(out) = Na(+)(out) + H(+)(in). Seems to switch between active and inactive modes in response to various stimuli. Activated directly or indirectly by membrane phosphatidylinositol (PIs). Regulated by a variety of auxiliary proteins, which facilitate the maturation, cell surface expression and function of the transporter. Inhibited specifically by the drug tenapanor. Plasma membrane Na(+)/H(+) antiporter. Exchanges intracellular H(+) ions for extracellular Na(+) in 1:1 stoichiometry, playing a key role in salt and fluid absorption and pH homeostasis. Major apical Na(+)/H(+) exchanger in kidney and intestine playing an important role in renal and intestine Na(+) absorption and blood pressure regulation. This is Sodium/hydrogen exchanger 3 from Homo sapiens (Human).